The following is an 88-amino-acid chain: Large ribosomal subunit protein eL31 (88 aa).

Belongs to the eukaryotic ribosomal protein eL31 family.

The polypeptide is Large ribosomal subunit protein eL31 (Saccharolobus islandicus (strain Y.N.15.51 / Yellowstone #2) (Sulfolobus islandicus)).